Reading from the N-terminus, the 58-residue chain is Isocitrate lyase (58 aa).

It belongs to the isocitrate lyase/PEP mutase superfamily. Isocitrate lyase family. In terms of assembly, homotetramer. It depends on Mg(2+) as a cofactor.

The protein localises to the glyoxysome. The enzyme catalyses D-threo-isocitrate = glyoxylate + succinate. The protein operates within carbohydrate metabolism; glyoxylate cycle; (S)-malate from isocitrate: step 1/2. Its function is as follows. Involved in storage lipid mobilization during the growth of higher plant seedling. The sequence is that of Isocitrate lyase from Helianthus annuus (Common sunflower).